Consider the following 474-residue polypeptide: Bifunctional protein HldE (474 aa).

The interval 1-318 (MKMTLPDFHC…ENAIRGRAET (318 aa)) is ribokinase. ATP is bound at residue 195 to 198 (NLSE). Aspartate 264 is an active-site residue. Residues 344–474 (MTNGCFDILH…TNIIKAIKNQ (131 aa)) form a cytidylyltransferase region.

It in the N-terminal section; belongs to the carbohydrate kinase PfkB family. In the C-terminal section; belongs to the cytidylyltransferase family. Homodimer.

The enzyme catalyses D-glycero-beta-D-manno-heptose 7-phosphate + ATP = D-glycero-beta-D-manno-heptose 1,7-bisphosphate + ADP + H(+). It carries out the reaction D-glycero-beta-D-manno-heptose 1-phosphate + ATP + H(+) = ADP-D-glycero-beta-D-manno-heptose + diphosphate. Its pathway is nucleotide-sugar biosynthesis; ADP-L-glycero-beta-D-manno-heptose biosynthesis; ADP-L-glycero-beta-D-manno-heptose from D-glycero-beta-D-manno-heptose 7-phosphate: step 1/4. It participates in nucleotide-sugar biosynthesis; ADP-L-glycero-beta-D-manno-heptose biosynthesis; ADP-L-glycero-beta-D-manno-heptose from D-glycero-beta-D-manno-heptose 7-phosphate: step 3/4. The protein operates within bacterial outer membrane biogenesis; LPS core biosynthesis. In terms of biological role, catalyzes the phosphorylation of D-glycero-D-manno-heptose 7-phosphate at the C-1 position to selectively form D-glycero-beta-D-manno-heptose-1,7-bisphosphate. Catalyzes the ADP transfer from ATP to D-glycero-beta-D-manno-heptose 1-phosphate, yielding ADP-D-glycero-beta-D-manno-heptose. This is Bifunctional protein HldE from Photorhabdus laumondii subsp. laumondii (strain DSM 15139 / CIP 105565 / TT01) (Photorhabdus luminescens subsp. laumondii).